A 121-amino-acid polypeptide reads, in one-letter code: Large ribosomal subunit protein uL14 (121 aa).

The protein belongs to the universal ribosomal protein uL14 family. As to quaternary structure, part of the 50S ribosomal subunit. Forms a cluster with proteins L3 and L19. In the 70S ribosome, L14 and L19 interact and together make contacts with the 16S rRNA in bridges B5 and B8.

Binds to 23S rRNA. Forms part of two intersubunit bridges in the 70S ribosome. The sequence is that of Large ribosomal subunit protein uL14 from Parasynechococcus marenigrum (strain WH8102).